We begin with the raw amino-acid sequence, 339 residues long: Cathepsin B (339 aa).

A signal peptide spans 1 to 17 (MWWSLILLSCLLALTSA). Positions 18 to 79 (HDKPSFHPLS…GRVAFGEDID (62 aa)) are cleaved as a propeptide — activation peptide. 6 disulfide bridges follow: Cys-93/Cys-122, Cys-105/Cys-150, Cys-141/Cys-207, Cys-142/Cys-146, Cys-179/Cys-211, and Cys-187/Cys-198. Cys-108 is an active-site residue. N-linked (GlcNAc...) asparagine glycosylation occurs at Asn-192. N6-acetyllysine is present on Lys-220. Residues His-278 and Asn-298 contribute to the active site. The propeptide occupies 334–339 (QYWGRF).

The protein belongs to the peptidase C1 family. In terms of assembly, dimer of a heavy chain and a light chain cross-linked by a disulfide bond. Interacts with SRPX2. Directly interacts with SHKBP1. As to expression, expressed in thyroid epithelial cells.

It localises to the lysosome. The protein localises to the melanosome. The protein resides in the secreted. It is found in the extracellular space. Its subcellular location is the apical cell membrane. The catalysed reaction is Hydrolysis of proteins with broad specificity for peptide bonds. Preferentially cleaves -Arg-Arg-|-Xaa bonds in small molecule substrates (thus differing from cathepsin L). In addition to being an endopeptidase, shows peptidyl-dipeptidase activity, liberating C-terminal dipeptides.. Functionally, thiol protease which is believed to participate in intracellular degradation and turnover of proteins. Cleaves matrix extracellular phosphoglycoprotein MEPE. Involved in the solubilization of cross-linked TG/thyroglobulin in the thyroid follicle lumen. Has also been implicated in tumor invasion and metastasis. This is Cathepsin B (Ctsb) from Mus musculus (Mouse).